The primary structure comprises 137 residues: Small ribosomal subunit protein uS12 (137 aa).

Disordered regions lie at residues 1 to 21 (MPTI…KSDS) and 34 to 57 (VHTK…TPKK).

It belongs to the universal ribosomal protein uS12 family. As to quaternary structure, part of the 30S ribosomal subunit. Contacts proteins S8 and S17. May interact with IF1 in the 30S initiation complex.

Functionally, with S4 and S5 plays an important role in translational accuracy. Interacts with and stabilizes bases of the 16S rRNA that are involved in tRNA selection in the A site and with the mRNA backbone. Located at the interface of the 30S and 50S subunits, it traverses the body of the 30S subunit contacting proteins on the other side and probably holding the rRNA structure together. The combined cluster of proteins S8, S12 and S17 appears to hold together the shoulder and platform of the 30S subunit. The chain is Small ribosomal subunit protein uS12 from Streptococcus mutans serotype c (strain ATCC 700610 / UA159).